Reading from the N-terminus, the 512-residue chain is Annexin A7 (512 aa).

The span at 14-38 (GYPGGDPSYPPAAQQAFPGGQFPPA) shows a compositional bias: low complexity. Disordered regions lie at residues 14–62 (GYPG…GYPH) and 146–190 (GGFS…AQPT). The span at 39–52 (AGGGAFPPASGGGN) shows a compositional bias: gly residues. Residues 164–182 (MPGQMPGQMPGQAPSGYPS) are compositionally biased toward low complexity. Annexin repeat units lie at residues 209-279 (FDAL…ALFM), 280-351 (PSTY…SIMA), 364-436 (QQAE…AVLQ), and 440-511 (NRPL…AISG).

The protein belongs to the annexin family.

Functionally, calcium/phospholipid-binding protein which promotes membrane fusion and is involved in exocytosis. The polypeptide is Annexin A7 (anxa7) (Xenopus laevis (African clawed frog)).